The following is a 508-amino-acid chain: Lysine--tRNA ligase (508 aa).

Residues Glu416 and Glu423 each contribute to the Mg(2+) site.

Belongs to the class-II aminoacyl-tRNA synthetase family. Homodimer. The cofactor is Mg(2+).

It localises to the cytoplasm. The enzyme catalyses tRNA(Lys) + L-lysine + ATP = L-lysyl-tRNA(Lys) + AMP + diphosphate. The polypeptide is Lysine--tRNA ligase (Prochlorococcus marinus (strain MIT 9303)).